The sequence spans 68 residues: Lantibiotic mersacidin (68 aa).

The segment at 1–28 (MSQEAIIRSWKDPFSRENSTQNPAGNPF) is disordered. Residues 1-48 (MSQEAIIRSWKDPFSRENSTQNPAGNPFSELKEAQMDKLVGAGDMEAA) constitute a propeptide that is removed on maturation. The segment at residues 49–50 (CT) is a cross-link (beta-methyllanthionine (Cys-Thr)). 2 cross-links (beta-methyllanthionine (Thr-Cys)) span residues 52-60 (TLPGGGGVC) and 61-66 (TLTSEC). A cross-link (S-(2-aminovinyl)-3-methyl-D-cysteine (Thr-Cys)) is located at residues 63-68 (TSECIC). At serine 64 the chain carries 2,3-didehydroalanine (Ser).

It belongs to the type B lantibiotic family. Post-translationally, maturation of lantibiotics involves the enzymatic conversion of Thr, and Ser into dehydrated AA and the formation of thioether bonds with cysteine. The carboxy-terminal beta-methyllanthionine undergoes decarboxylation. This is followed by membrane translocation and cleavage of the modified precursor.

Kills a number of Gram-positive bacteria. Acts at the level of cell wall biosynthesis by interfering with bacterial peptidoglycan biosynthesis. Specifically inhibits the conversion of the lipid II intermediate into polymeric nascent glycan strands by transglycosylation. May interact with the peptidoglycan precursor rather than with the enzyme. This Bacillus sp. (strain HIL-Y85/54728) protein is Lantibiotic mersacidin (mrsA).